A 44-amino-acid polypeptide reads, in one-letter code: Endochitinase 1 (44 aa).

The protein belongs to the glycosyl hydrolase 19 family. Chitinase class I subfamily.

The enzyme catalyses Random endo-hydrolysis of N-acetyl-beta-D-glucosaminide (1-&gt;4)-beta-linkages in chitin and chitodextrins.. Its function is as follows. Defense against chitin-containing fungal pathogens. This chain is Endochitinase 1, found in Capsicum chinense (Scotch bonnet).